A 122-amino-acid chain; its full sequence is uncharacterized protein (122 aa).

It to B.subtilis YpdA.

This is an uncharacterized protein from Bacillus licheniformis.